Consider the following 185-residue polypeptide: ATP synthase subunit b 2 (185 aa).

Residues 1–25 (MAESHGNAHGATAHTEADGGHKAPF) are disordered. A helical membrane pass occupies residues 34–56 (ASQLVSLTIAFVALYLISSRLAL).

The protein belongs to the ATPase B chain family. As to quaternary structure, F-type ATPases have 2 components, F(1) - the catalytic core - and F(0) - the membrane proton channel. F(1) has five subunits: alpha(3), beta(3), gamma(1), delta(1), epsilon(1). F(0) has three main subunits: a(1), b(2) and c(10-14). The alpha and beta chains form an alternating ring which encloses part of the gamma chain. F(1) is attached to F(0) by a central stalk formed by the gamma and epsilon chains, while a peripheral stalk is formed by the delta and b chains.

It localises to the cell inner membrane. F(1)F(0) ATP synthase produces ATP from ADP in the presence of a proton or sodium gradient. F-type ATPases consist of two structural domains, F(1) containing the extramembraneous catalytic core and F(0) containing the membrane proton channel, linked together by a central stalk and a peripheral stalk. During catalysis, ATP synthesis in the catalytic domain of F(1) is coupled via a rotary mechanism of the central stalk subunits to proton translocation. Its function is as follows. Component of the F(0) channel, it forms part of the peripheral stalk, linking F(1) to F(0). The b'-subunit is a diverged and duplicated form of b found in plants and photosynthetic bacteria. The polypeptide is ATP synthase subunit b 2 (atpF2) (Nitrobacter winogradskyi (strain ATCC 25391 / DSM 10237 / CIP 104748 / NCIMB 11846 / Nb-255)).